The chain runs to 116 residues: Protein Rev (116 aa).

Phosphoserine; by host CK2 occurs at positions 5 and 8. The interval Leu18–Asn26 is homomultimerization. A disordered region spans residues Tyr23 to Arg48. A Nuclear localization signal and RNA-binding (RRE) motif is present at residues Thr34 to Arg50. A compositionally biased stretch (basic residues) spans Gln36 to Arg48. The short motif at Leu73–Asp84 is the Nuclear export signal and binding to XPO1 element. The tract at residues Gly90–Glu116 is disordered. Phosphoserine; by host occurs at positions 92 and 99.

This sequence belongs to the HIV-1 REV protein family. In terms of assembly, homomultimer; when bound to the RRE. Multimeric assembly is essential for activity and may involve XPO1. Binds to human KPNB1, XPO1, TNPO1, RANBP5 and IPO7. Interacts with the viral Integrase. Interacts with human KHDRBS1. Interacts with human NAP1; this interaction decreases Rev multimerization and stimulates its activity. Interacts with human DEAD-box helicases DDX3 and DDX24; these interactions may serve for viral RNA export to the cytoplasm and packaging, respectively. Interacts with human PSIP1; this interaction may inhibit HIV-1 DNA integration by promoting dissociation of the Integrase-LEDGF/p75 complex. Post-translationally, asymmetrically arginine dimethylated at one site by host PRMT6. Methylation impairs the RNA-binding activity and export of viral RNA from the nucleus to the cytoplasm. Phosphorylated by protein kinase CK2. Presence of, and maybe binding to the N-terminus of the regulatory beta subunit of CK2 is necessary for CK2-mediated Rev's phosphorylation.

The protein localises to the host nucleus. Its subcellular location is the host nucleolus. It is found in the host cytoplasm. Its function is as follows. Escorts unspliced or incompletely spliced viral pre-mRNAs (late transcripts) out of the nucleus of infected cells. These pre-mRNAs carry a recognition sequence called Rev responsive element (RRE) located in the env gene, that is not present in fully spliced viral mRNAs (early transcripts). This function is essential since most viral proteins are translated from unspliced or partially spliced pre-mRNAs which cannot exit the nucleus by the pathway used by fully processed cellular mRNAs. Rev itself is translated from a fully spliced mRNA that readily exits the nucleus. Rev's nuclear localization signal (NLS) binds directly to KPNB1/Importin beta-1 without previous binding to KPNA1/Importin alpha-1. KPNB1 binds to the GDP bound form of RAN (Ran-GDP) and targets Rev to the nucleus. In the nucleus, the conversion from Ran-GDP to Ran-GTP dissociates Rev from KPNB1 and allows Rev's binding to the RRE in viral pre-mRNAs. Rev multimerization on the RRE via cooperative assembly exposes its nuclear export signal (NES) to the surface. Rev can then form a complex with XPO1/CRM1 and Ran-GTP, leading to nuclear export of the complex. Conversion from Ran-GTP to Ran-GDP mediates dissociation of the Rev/RRE/XPO1/RAN complex, so that Rev can return to the nucleus for a subsequent round of export. Beside KPNB1, also seems to interact with TNPO1/Transportin-1, RANBP5/IPO5 and IPO7/RANBP7 for nuclear import. The nucleoporin-like HRB/RIP is an essential cofactor that probably indirectly interacts with Rev to release HIV RNAs from the perinuclear region to the cytoplasm. This is Protein Rev from Human immunodeficiency virus type 1 group M subtype B (isolate OYI) (HIV-1).